A 63-amino-acid chain; its full sequence is MADAKTIKIEQIGSPIRRHRSQRSTLIGLKLNKIGRVTELPDTPAVRGMITKVHHLVRIVDEK.

The protein belongs to the universal ribosomal protein uL30 family. Part of the 50S ribosomal subunit.

This is Large ribosomal subunit protein uL30 from Bradyrhizobium sp. (strain ORS 278).